Reading from the N-terminus, the 685-residue chain is DNA-directed RNA polymerase subunit beta' (685 aa).

4 residues coordinate Zn(2+): cysteine 69, cysteine 71, cysteine 87, and cysteine 90. The Mg(2+) site is built by aspartate 489, aspartate 491, and aspartate 493.

Belongs to the RNA polymerase beta' chain family. RpoC1 subfamily. In plastids the minimal PEP RNA polymerase catalytic core is composed of four subunits: alpha, beta, beta', and beta''. When a (nuclear-encoded) sigma factor is associated with the core the holoenzyme is formed, which can initiate transcription. It depends on Mg(2+) as a cofactor. Zn(2+) is required as a cofactor.

The protein localises to the plastid. It is found in the chloroplast. The catalysed reaction is RNA(n) + a ribonucleoside 5'-triphosphate = RNA(n+1) + diphosphate. In terms of biological role, DNA-dependent RNA polymerase catalyzes the transcription of DNA into RNA using the four ribonucleoside triphosphates as substrates. This Buxus microphylla (Littleleaf boxwood) protein is DNA-directed RNA polymerase subunit beta'.